The sequence spans 266 residues: Elongator complex protein 6 (266 aa).

It belongs to the ELP6 family. As to quaternary structure, component of the elongator complex which consists of ELP1, ELP2, ELP3, ELP4, ELP5 and ELP6.

Its subcellular location is the cytoplasm. It localises to the nucleus. Its pathway is tRNA modification; 5-methoxycarbonylmethyl-2-thiouridine-tRNA biosynthesis. Functionally, component of the elongator complex which is required for multiple tRNA modifications, including mcm5U (5-methoxycarbonylmethyl uridine), mcm5s2U (5-methoxycarbonylmethyl-2-thiouridine), and ncm5U (5-carbamoylmethyl uridine). The elongator complex catalyzes formation of carboxymethyluridine in the wobble base at position 34 in tRNAs. Involved in cell migration. In Homo sapiens (Human), this protein is Elongator complex protein 6.